The primary structure comprises 166 residues: Disulfide bond reductase DsbH (166 aa).

Positions 1-22 (MKFWLQGCAFVGCLLLTLPCCA) are cleaved as a signal peptide. In terms of domain architecture, Thioredoxin spans 32 to 166 (LQQTRPIAAA…SKVKSALKLR (135 aa)). Cys72 and Cys75 are disulfide-bonded. 73–74 (MW) lines the substrate pocket.

Monomer.

The protein localises to the periplasm. Functionally, catalyzes the reduction of disulfide bonds. May function in reducing intermolecular disulfides between proteins and small molecules in the periplasm, or keeping a specific subset of periplasmic proteins reduced, or maintaining the periplasm of Chlamydia in a generally reducing state. Seems to be unable to oxidize thiols into disulfides and does not display disulfide bond isomerase activity. The chain is Disulfide bond reductase DsbH (dsbH) from Chlamydia pneumoniae (Chlamydophila pneumoniae).